The sequence spans 96 residues: Large ribosomal subunit protein uL4 (96 aa).

The tract at residues 77-96 (RAPNKKVKRRELKKNPLKNL) is disordered. Residues 79–96 (PNKKVKRRELKKNPLKNL) are compositionally biased toward basic residues.

It belongs to the universal ribosomal protein uL4 family. In terms of assembly, component of the large ribosomal subunit.

It localises to the cytoplasm. In terms of biological role, component of the large ribosomal subunit. The ribosome is a large ribonucleoprotein complex responsible for the synthesis of proteins in the cell. This is Large ribosomal subunit protein uL4 (rpl4) from Xenopus tropicalis (Western clawed frog).